The primary structure comprises 212 residues: Protein-L-isoaspartate O-methyltransferase (212 aa).

Serine 60 is an active-site residue.

Belongs to the methyltransferase superfamily. L-isoaspartyl/D-aspartyl protein methyltransferase family.

Its subcellular location is the cytoplasm. It catalyses the reaction [protein]-L-isoaspartate + S-adenosyl-L-methionine = [protein]-L-isoaspartate alpha-methyl ester + S-adenosyl-L-homocysteine. In terms of biological role, catalyzes the methyl esterification of L-isoaspartyl residues in peptides and proteins that result from spontaneous decomposition of normal L-aspartyl and L-asparaginyl residues. It plays a role in the repair and/or degradation of damaged proteins. The sequence is that of Protein-L-isoaspartate O-methyltransferase from Methanococcus maripaludis (strain C5 / ATCC BAA-1333).